The following is a 256-amino-acid chain: Alcohol dehydrogenase (256 aa).

12-35 (FVAGLGGIGLDTSKELLKRDLKNL) provides a ligand contact to NAD(+). S140 serves as a coordination point for substrate. The Proton acceptor role is filled by Y153.

The protein belongs to the short-chain dehydrogenases/reductases (SDR) family. In terms of assembly, homodimer.

The enzyme catalyses a primary alcohol + NAD(+) = an aldehyde + NADH + H(+). It carries out the reaction a secondary alcohol + NAD(+) = a ketone + NADH + H(+). The chain is Alcohol dehydrogenase (Adh) from Drosophila sechellia (Fruit fly).